We begin with the raw amino-acid sequence, 405 residues long: Enoyl-[acyl-carrier-protein] reductase [NADH] (405 aa).

NAD(+) contacts are provided by residues 51–56 (GASSGY), 77–78 (FE), 114–115 (DA), and 142–143 (LA). Residue Tyr228 coordinates substrate. Tyr238 functions as the Proton donor in the catalytic mechanism. Residues Lys247 and 276-278 (VVT) each bind NAD(+).

This sequence belongs to the TER reductase family. Monomer.

The catalysed reaction is a 2,3-saturated acyl-[ACP] + NAD(+) = a (2E)-enoyl-[ACP] + NADH + H(+). It participates in lipid metabolism; fatty acid biosynthesis. Functionally, involved in the final reduction of the elongation cycle of fatty acid synthesis (FAS II). Catalyzes the reduction of a carbon-carbon double bond in an enoyl moiety that is covalently linked to an acyl carrier protein (ACP). In Chromohalobacter salexigens (strain ATCC BAA-138 / DSM 3043 / CIP 106854 / NCIMB 13768 / 1H11), this protein is Enoyl-[acyl-carrier-protein] reductase [NADH].